The chain runs to 603 residues: 65-kDa microtubule-associated protein 7 (603 aa).

Coiled-coil stretches lie at residues lysine 48–isoleucine 79, aspartate 131–aspartate 186, and arginine 468–lysine 502. A disordered region spans residues isoleucine 501 to arginine 559. Serine 513 is subject to Phosphoserine. Polar residues-rich tracts occupy residues arginine 515–tyrosine 526 and arginine 537–arginine 559. Serine 599 is subject to Phosphoserine.

It belongs to the MAP65/ASE1 family. In terms of assembly, forms dimer. Binds to microtubules (MT).

It localises to the nucleus. It is found in the cytoplasm. Its subcellular location is the cytoskeleton. The protein localises to the spindle pole. In Arabidopsis thaliana (Mouse-ear cress), this protein is 65-kDa microtubule-associated protein 7 (MAP65-7).